Reading from the N-terminus, the 209-residue chain is dTTP/UTP pyrophosphatase (209 aa).

D88 acts as the Proton acceptor in catalysis.

The protein belongs to the Maf family. YhdE subfamily. It depends on a divalent metal cation as a cofactor.

Its subcellular location is the cytoplasm. The catalysed reaction is dTTP + H2O = dTMP + diphosphate + H(+). It carries out the reaction UTP + H2O = UMP + diphosphate + H(+). Its function is as follows. Nucleoside triphosphate pyrophosphatase that hydrolyzes dTTP and UTP. May have a dual role in cell division arrest and in preventing the incorporation of modified nucleotides into cellular nucleic acids. This Burkholderia mallei (strain ATCC 23344) protein is dTTP/UTP pyrophosphatase.